Consider the following 717-residue polypeptide: DNA ligase (717 aa).

NAD(+) contacts are provided by residues 44 to 48, 93 to 94, and Glu127; these read DADYD and SL. Lys129 serves as the catalytic N6-AMP-lysine intermediate. NAD(+)-binding residues include Arg150, Glu186, Lys302, and Lys326. Zn(2+)-binding residues include Cys431, Cys434, Cys455, and Cys461. The BRCT domain maps to 639 to 717; it reads ATDSPVAGKT…EDEWLALIGG (79 aa).

Belongs to the NAD-dependent DNA ligase family. LigA subfamily. Mg(2+) is required as a cofactor. The cofactor is Mn(2+).

It carries out the reaction NAD(+) + (deoxyribonucleotide)n-3'-hydroxyl + 5'-phospho-(deoxyribonucleotide)m = (deoxyribonucleotide)n+m + AMP + beta-nicotinamide D-nucleotide.. Functionally, DNA ligase that catalyzes the formation of phosphodiester linkages between 5'-phosphoryl and 3'-hydroxyl groups in double-stranded DNA using NAD as a coenzyme and as the energy source for the reaction. It is essential for DNA replication and repair of damaged DNA. In Rhizobium meliloti (strain 1021) (Ensifer meliloti), this protein is DNA ligase.